A 282-amino-acid chain; its full sequence is Succinate dehydrogenase [ubiquinone] iron-sulfur subunit, mitochondrial (282 aa).

Residues 1 to 26 (MAAVVFSLRRSGPVLRLSGALQVSRG) constitute a mitochondrion transit peptide. In terms of domain architecture, 2Fe-2S ferredoxin-type spans 42–135 (KKFAIYRWDP…VSKIYPLPHM (94 aa)). [2Fe-2S] cluster contacts are provided by Cys-95, Cys-100, Cys-103, and Cys-115. Residues 178-208 (DRDKLDGLYECILCACCSTSCPSYWWNADKY) form the 4Fe-4S ferredoxin-type domain. [4Fe-4S] cluster-binding residues include Cys-188, Cys-191, and Cys-194. Residue Cys-198 participates in [3Fe-4S] cluster binding. Residue Trp-203 coordinates a ubiquinone. [3Fe-4S] cluster is bound by residues Cys-245 and Cys-251. Cys-255 is a binding site for [4Fe-4S] cluster.

This sequence belongs to the succinate dehydrogenase/fumarate reductase iron-sulfur protein family. In terms of assembly, component of complex II composed of four subunits: the flavoprotein (FP) sdha, iron-sulfur protein (IP) sdhb, and a cytochrome b composed of sdhc and sdhd. It depends on [2Fe-2S] cluster as a cofactor. [3Fe-4S] cluster is required as a cofactor. The cofactor is [4Fe-4S] cluster.

It localises to the mitochondrion inner membrane. The enzyme catalyses a quinone + succinate = fumarate + a quinol. It catalyses the reaction (R)-malate + a quinone = enol-oxaloacetate + a quinol. It carries out the reaction (S)-malate + a quinone = enol-oxaloacetate + a quinol. It participates in carbohydrate metabolism; tricarboxylic acid cycle; fumarate from succinate (eukaryal route): step 1/1. With respect to regulation, enol-oxaloacetate inhibits the succinate dehydrogenase activity. In terms of biological role, iron-sulfur protein (IP) subunit of the succinate dehydrogenase complex (mitochondrial respiratory chain complex II), responsible for transferring electrons from succinate to ubiquinone (coenzyme Q). SDH also oxidizes malate to the non-canonical enol form of oxaloacetate, enol-oxaloacetate. Enol-oxaloacetate, which is a potent inhibitor of the succinate dehydrogenase activity, is further isomerized into keto-oxaloacetate. This chain is Succinate dehydrogenase [ubiquinone] iron-sulfur subunit, mitochondrial (sdhb), found in Xenopus laevis (African clawed frog).